Reading from the N-terminus, the 114-residue chain is DSANFDEYMKAIGIGFAMRQIGSVTKPTLIISAEGDHVTLKTTSTFKNMEWNFTLGEEFDETTADERKTKSTFTVDGDKLVQVQRWEGKETTISRAVSGDSMVATCSIGDVVCA.

This sequence belongs to the calycin superfamily. Fatty-acid binding protein (FABP) family. In terms of processing, the N-terminus is blocked.

It is found in the cytoplasm. Its function is as follows. FABPs are thought to play a role in the intracellular transport of long-chain fatty acids and their acyl-CoA esters. The protein is Fatty acid-binding protein, liver of Lethenteron camtschaticum (Japanese lamprey).